Reading from the N-terminus, the 179-residue chain is MNPELLPIIQLGNPTLRQKAAWVENIHDATIQQLIDDLIATVAKANGVGIASPQVAQSYRLFIVASRPNPRYPHAPEMEPTAMINPKIVGHSTEIVEGWEGCLSVPGIRGLVPRHQAIEVEYTDRYGNLQKQTLTDFVARIFQHEFDHLDGVLFIDRVESNLNTITEEEYQELVTKNTK.

Residues Cys102 and His144 each coordinate Fe cation. Residue Glu145 is part of the active site. His148 serves as a coordination point for Fe cation.

It belongs to the polypeptide deformylase family. Requires Fe(2+) as cofactor.

It catalyses the reaction N-terminal N-formyl-L-methionyl-[peptide] + H2O = N-terminal L-methionyl-[peptide] + formate. Removes the formyl group from the N-terminal Met of newly synthesized proteins. Requires at least a dipeptide for an efficient rate of reaction. N-terminal L-methionine is a prerequisite for activity but the enzyme has broad specificity at other positions. This Nostoc sp. (strain PCC 7120 / SAG 25.82 / UTEX 2576) protein is Peptide deformylase 2.